The chain runs to 259 residues: Global transcriptional regulator CodY (259 aa).

Residues 1–155 (MNLLEKTRKI…GATVVGMEIL (155 aa)) are GAF domain. Positions 203–222 (ASKIADRVGITRSVIVNALR) form a DNA-binding region, H-T-H motif. Ser-215 carries the phosphoserine modification.

It belongs to the CodY family.

Its subcellular location is the cytoplasm. Its function is as follows. DNA-binding global transcriptional regulator which is involved in the adaptive response to starvation and acts by directly or indirectly controlling the expression of numerous genes in response to nutrient availability. During rapid exponential growth, CodY is highly active and represses genes whose products allow adaptation to nutrient depletion. This is Global transcriptional regulator CodY from Geobacillus kaustophilus (strain HTA426).